A 101-amino-acid polypeptide reads, in one-letter code: Small ribosomal subunit protein uS14 (101 aa).

This sequence belongs to the universal ribosomal protein uS14 family. As to quaternary structure, part of the 30S ribosomal subunit. Contacts proteins S3 and S10.

Its function is as follows. Binds 16S rRNA, required for the assembly of 30S particles and may also be responsible for determining the conformation of the 16S rRNA at the A site. The chain is Small ribosomal subunit protein uS14 from Chlamydia caviae (strain ATCC VR-813 / DSM 19441 / 03DC25 / GPIC) (Chlamydophila caviae).